We begin with the raw amino-acid sequence, 522 residues long: AAA ATPase forming ring-shaped complexes (522 aa).

The interval 1–26 (MGQEKHTDAASQSRDPEAVAAHENDQ) is disordered. Positions 20-57 (AAHENDQLRQRNHALAKALTRATEELRKAKAQLEQFMA) form a coiled coil. ATP is bound at residue 248–253 (GNGKTL).

This sequence belongs to the AAA ATPase family. As to quaternary structure, homohexamer. Assembles into a hexameric ring structure.

This chain is AAA ATPase forming ring-shaped complexes, found in Bifidobacterium animalis subsp. lactis (strain AD011).